Reading from the N-terminus, the 159-residue chain is Small ribosomal subunit protein uS7c (159 aa).

The segment at 137–159 (HAIRKKEETHKMAESNRAXAHYR) is disordered. A compositionally biased stretch (basic and acidic residues) spans 141-150 (KKEETHKMAE).

The protein belongs to the universal ribosomal protein uS7 family. As to quaternary structure, part of the 30S ribosomal subunit.

It localises to the plastid. The protein localises to the chloroplast. In terms of biological role, one of the primary rRNA binding proteins, it binds directly to 16S rRNA where it nucleates assembly of the head domain of the 30S subunit. The protein is Small ribosomal subunit protein uS7c (rps7) of Sciadopitys verticillata (Japanese umbrella-pine).